Here is a 769-residue protein sequence, read N- to C-terminus: Serine protease HtrA-like (769 aa).

The segment covering 1 to 20 (MDIGKKHVIPKSQYRRKRRE) has biased composition (basic residues). Disordered regions lie at residues 1–287 (MDIG…DKDN) and 324–390 (EDKH…KGRA). Composition is skewed to basic and acidic residues over residues 21 to 64 (FFHN…ERFK) and 71 to 108 (LEQR…DVSK). Polar residues predominate over residues 126–137 (YEQNSEATLSTK). Positions 138–186 (STDKVESTEMRKLSSDKNKVGHEEQHVLSKPSEHDKETRIDSESSRTDS) are enriched in basic and acidic residues. Positions 247 to 262 (QQSQNEQTKTYTYGDS) are enriched in polar residues. The segment covering 264-287 (QNDKSNHENDLSHHTPSISDDKDN) has biased composition (basic and acidic residues). Residues 331-347 (ADSSETVGYQSQSTASH) are compositionally biased toward polar residues. Residues 348–364 (RSTEKRNISINDHDKLN) are compositionally biased toward basic and acidic residues. The segment covering 365 to 390 (GQKTNTKTSANNNQKKATSKLNKGRA) has biased composition (polar residues). Residues 410-430 (LVILMGIIILIVILNAIFNNV) traverse the membrane as a helical segment. Catalysis depends on charge relay system residues His-504, Asp-534, and Ser-619. In terms of domain architecture, PDZ spans 680–733 (IASLNSFERQAVKLPGKVKNGVVVDQVDNNGLADQSGLKKGDVITELDGKLLED).

It belongs to the peptidase S1C family.

Its subcellular location is the cell membrane. This chain is Serine protease HtrA-like, found in Staphylococcus aureus (strain N315).